Consider the following 140-residue polypeptide: Putative nickel-responsive regulator 3 (140 aa).

Residues H81, H92, H94, and C100 each contribute to the Ni(2+) site.

The protein belongs to the transcriptional regulatory CopG/NikR family. Ni(2+) is required as a cofactor.

Its function is as follows. Transcriptional regulator. This chain is Putative nickel-responsive regulator 3, found in Methanosarcina acetivorans (strain ATCC 35395 / DSM 2834 / JCM 12185 / C2A).